Reading from the N-terminus, the 586-residue chain is Pyruvate kinase (586 aa).

Residue Arg-32 participates in substrate binding. Residues Asn-34, Ser-36, Asp-66, and Thr-67 each coordinate K(+). 34 to 37 (NFSH) lines the ATP pocket. Residues Arg-73 and Lys-156 each coordinate ATP. Glu-222 is a binding site for Mg(2+). Substrate-binding residues include Gly-245, Asp-246, and Thr-278. Asp-246 is a binding site for Mg(2+).

Belongs to the pyruvate kinase family. It in the C-terminal section; belongs to the PEP-utilizing enzyme family. Requires Mg(2+) as cofactor. K(+) serves as cofactor.

It carries out the reaction pyruvate + ATP = phosphoenolpyruvate + ADP + H(+). The protein operates within carbohydrate degradation; glycolysis; pyruvate from D-glyceraldehyde 3-phosphate: step 5/5. This Staphylococcus saprophyticus subsp. saprophyticus (strain ATCC 15305 / DSM 20229 / NCIMB 8711 / NCTC 7292 / S-41) protein is Pyruvate kinase (pyk).